The following is a 606-amino-acid chain: MSTASAASSSSSSSAGEMIEAPSQVLNFEEIDYKEIEVEEVVGRGAFGVVCKAKWRAKDVAIKQIESESERKAFIVELRQLSRVNHPNIVKLYGACLNPVCLVMEYAEGGSLYNVLHGAEPLPYYTAAHAMSWCLQCSQGVAYLHSMQPKALIHRDLKPPNLLLVAGGTVLKICDFGTACDIQTHMTNNKGSAAWMAPEVFEGSNYSEKCDVFSWGIILWEVITRRKPFDEIGGPAFRIMWAVHNGTRPPLIKNLPKPIESLMTRCWSKDPSQRPSMEEIVKIMTHLMRYFPGADEPLQYPCQYSDEGQSNSATSTGSFMDIASTNTSNKSDTNMEQVPATNDTIKRLESKLLKNQAKQQSESGRLSLGASRGSSVESLPPASEGKRMSADMSEIEARIAATTAYSKPKRGHRKTASFGNILDVPEIVISGNGQPRRRSIQDLTVTGTEPGQVSSRSSSPSVRMITTSGPTSEKPTRSHPWTPDDSTDTNGSDNSIPMAYLTLDHQLQPLAPCPNSKESMAVFEQHCKMAQEYMKVQTEIALLLQRKQELVAELDQDEKDQQNTSRLVQEHKKLLDENKSLSTYYQQCKKQLEVIRSQQQKRQGTS.

An interaction with MAPK8IP1 region spans residues 1–300 (MSTASAASSS…FPGADEPLQY (300 aa)). Positions 36-291 (IEVEEVVGRG…KIMTHLMRYF (256 aa)) constitute a Protein kinase domain. Residues 42 to 50 (VGRGAFGVV) and K63 contribute to the ATP site. A Glycyl lysine isopeptide (Lys-Gly) (interchain with G-Cter in ubiquitin) cross-link involves residue K72. D156 (proton acceptor) is an active-site residue. K158 is covalently cross-linked (Glycyl lysine isopeptide (Lys-Gly) (interchain with G-Cter in ubiquitin)). Phosphothreonine; by autocatalysis is present on residues T184 and T187. At S192 the chain carries Phosphoserine; by autocatalysis. K209 participates in a covalent cross-link: Glycyl lysine isopeptide (Lys-Gly) (interchain with G-Cter in ubiquitin). Disordered stretches follow at residues 301–338 (PCQY…MEQV) and 354–391 (KNQA…MSAD). The span at 306–338 (DEGQSNSATSTGSFMDIASTNTSNKSDTNMEQV) shows a compositional bias: polar residues. Low complexity predominate over residues 361–375 (SESGRLSLGASRGSS). S367, S389, and S439 each carry phosphoserine. Polar residues predominate over residues 443–452 (LTVTGTEPGQ). A disordered region spans residues 443–493 (LTVTGTEPGQVSSRSSSPSVRMITTSGPTSEKPTRSHPWTPDDSTDTNGSD). Over residues 453–463 (VSSRSSSPSVR) the composition is skewed to low complexity. Phosphoserine is present on S455. Residues 464–473 (MITTSGPTSE) show a composition bias toward polar residues.

It belongs to the protein kinase superfamily. STE Ser/Thr protein kinase family. MAP kinase kinase kinase subfamily. Can form homodimer. Binds both upstream activators and downstream substrates in multimolecular complexes. Interacts with TAB1/MAP3K7IP1, TAB2/MAP3K7IP2 and TAB3/MAP3K7IP3. Identified in the TRIKA2 complex composed of MAP3K7/TAK1, TAB1/MAP3K7IP1 and TAB2/MAP3K7IP2. Interacts with PPM1L and PPM1B/PP2CB. Interaction with PP2A and PPP6C leads to its repressed activity. Interacts with TRAF6 and TAB1/MAP3K7IP1; during IL-1 signaling. Interacts with TAOK1 and TAOK2; interaction with TAOK2 interferes with MAP3K7 interaction with IKKA, thus preventing NF-kappa-B activation. Interacts with DYNC2I2 (via WD domains). Interacts with CYLD and RBCK1. Interacts with TGFBR1; induces MAP3K7/TAK1 activation by TRAF6. Interacts with MAPK8IP1 and SMAD6. Interacts with isoform 1 of VRK2. Interacts with DAB2; the interaction is induced by TGF-beta stimulation and may mediate TGF-beta stimulated JNK activation. Interacts with TRIM5. Part of a complex containing ITCH, NDFIP1 and MAP3K7. Interacts with IFIT5; the interaction synergizes the recruitment of IKK to MAP3K7 and enhances IKK phosphorylation. Interacts with PLEKHM1 (via N- and C-terminus). Found in a complex with SH3RF1, RAC2, MAP2K7/MKK7, MAPK8IP1/JIP1, MAPK8/JNK1 and MAPK9/JNK2. Interacts with SASH1. Interacts with RIPK1. Mg(2+) serves as cofactor. In terms of processing, association with TAB1/MAP3K7IP1 promotes autophosphorylation at Ser-192 and subsequent activation. Association with TAB2/MAP3K7IP2, itself associated with free unanchored Lys-63 polyubiquitin chain, promotes autophosphorylation and subsequent activation of MAP3K7. Dephosphorylation at Ser-192 by PPM1B/PP2CB and at Thr-187 by PP2A and PPP6C leads to inactivation. 'Lys-48'-linked polyubiquitination at Lys-72 is induced by TNFalpha, and leads to proteasomal degradation. Undergoes 'Lys-48'-linked polyubiquitination catalyzed by ITCH. 'Lys-63'-linked polyubiquitination at Lys-158 by TRIM8 does not lead to proteasomal degradation but contributes to autophosphorylation and activation. Deubiquitinated by CYLD, a protease that selectively cleaves 'Lys-63'-linked ubiquitin chains. Deubiquitinated by USP19; leading to negative regulation of TNF-alpha- and IL-1beta-triggered NF-kappa-B activation.

The protein localises to the cytoplasm. Its subcellular location is the cell membrane. The enzyme catalyses L-seryl-[protein] + ATP = O-phospho-L-seryl-[protein] + ADP + H(+). It carries out the reaction L-threonyl-[protein] + ATP = O-phospho-L-threonyl-[protein] + ADP + H(+). Its activity is regulated as follows. Activated by pro-inflammatory cytokines and in response to physical and chemical stresses, including osmotic stress, oxidative stress, arsenic and ultraviolet light irradiation. Activated by 'Lys-63'-linked polyubiquitination and by autophosphorylation. Association with TAB1/MAP3K7IP1 and TAB2/MAP3K7IP2 promotes activation through autophosphorylation, whereas PPM1B/PP2CB, PP2A and PPP6C dephosphorylation leads to inactivation. Ceramides are also able to activate MAP3K7/TAK1. Functionally, serine/threonine kinase which acts as an essential component of the MAP kinase signal transduction pathway. Plays an important role in the cascades of cellular responses evoked by changes in the environment. Mediates signal transduction of TRAF6, various cytokines including interleukin-1 (IL-1), transforming growth factor-beta (TGFB), TGFB-related factors like BMP2 and BMP4, toll-like receptors (TLR), tumor necrosis factor receptor CD40 and B-cell receptor (BCR). Once activated, acts as an upstream activator of the MKK/JNK signal transduction cascade and the p38 MAPK signal transduction cascade through the phosphorylation and activation of several MAP kinase kinases like MAP2K1/MEK1, MAP2K3/MKK3, MAP2K6/MKK6 and MAP2K7/MKK7. These MAP2Ks in turn activate p38 MAPKs and c-jun N-terminal kinases (JNKs); both p38 MAPK and JNK pathways control the transcription factors activator protein-1 (AP-1). Independently of MAP2Ks and p38 MAPKs, acts as a key activator of NF-kappa-B by promoting activation of the I-kappa-B-kinase (IKK) core complex. Mechanistically, recruited to polyubiquitin chains of RIPK2 and IKBKG/NEMO via TAB2/MAP3K7IP2 and TAB3/MAP3K7IP3, and catalyzes phosphorylation and activation of IKBKB/IKKB component of the IKK complex, leading to NF-kappa-B activation. In osmotic stress signaling, plays a major role in the activation of MAPK8/JNK1, but not that of NF-kappa-B. Promotes TRIM5 capsid-specific restriction activity. Phosphorylates RIPK1 at 'Ser-321' which positively regulates RIPK1 interaction with RIPK3 to promote necroptosis but negatively regulates RIPK1 kinase activity and its interaction with FADD to mediate apoptosis. Phosphorylates STING1 in response to cGAMP-activation, promoting association between STEEP1 and STING1 and STING1 translocation to COPII vesicles. This Pongo abelii (Sumatran orangutan) protein is Mitogen-activated protein kinase kinase kinase 7 (MAP3K7).